A 752-amino-acid polypeptide reads, in one-letter code: Two pore channel protein 2 (752 aa).

At 1-84 the chain is on the cytoplasmic side; it reads MAEPQAESEP…RRYYSNVCQR (84 aa). The chain crosses the membrane as a helical span at residues 85 to 105; the sequence is TLSFTIFLILFLAFIETPSSL. At 106–127 the chain is on the extracellular side; sequence TSTADVRYRAAPWEPPCGLTES. A helical membrane pass occupies residues 128 to 148; the sequence is VEVLCLLVFAADLSVKGYLFG. Topologically, residues 149-155 are cytoplasmic; it reads WAHFQKN. Residues 156–176 form a helical membrane-spanning segment; it reads LWLLGYLVVLVVSLVDWTVSL. The Extracellular portion of the chain corresponds to 177 to 183; the sequence is SLVCHEP. The helical transmembrane segment at 184–204 threads the bilayer; that stretch reads LRIRRLLRPFFLLQNSSMMKK. Residues 203–207 form an interaction with phosphatidylinositol 3,5-bisphosphate region; it reads KKTLK. At 205–218 the chain is on the cytoplasmic side; it reads TLKCIRWSLPEMAS. The helical transmembrane segment at 219–239 threads the bilayer; sequence VGLLLAIHLCLFTMFGMLLFA. Residues 240–254 are Extracellular-facing; the sequence is GGKQDDGQDRERLTY. Residues 255 to 279 constitute an intramembrane region (helical; Pore-forming); it reads FQNLPESLTSLLVLLTTANNPDVMI. Residues 280–289 lie on the Extracellular side of the membrane; that stretch reads PAYSKNRAYA. The helical transmembrane segment at 290–310 threads the bilayer; that stretch reads IFFIVFTVIGSLFLMNLLTAI. Topologically, residues 311-436 are cytoplasmic; that stretch reads IYSQFRGYLM…FLFGHYYFDY (126 aa). Residues 437–459 traverse the membrane as a helical segment; it reads LGNLIALANLVSICVFLVLDADV. The Extracellular portion of the chain corresponds to 460–465; that stretch reads LPAERD. A helical membrane pass occupies residues 466 to 486; the sequence is DFILGILNCVFIVYYLLEMLL. Topologically, residues 487 to 502 are cytoplasmic; the sequence is KVFALGLRGYLSYPSN. The helical transmembrane segment at 503 to 523 threads the bilayer; it reads VFDGLLTVVLLVLEISTLAVY. Residues 524-554 lie on the Extracellular side of the membrane; that stretch reads RLPHPGWRPEMVGLLSLWDMTRMLNMLIVFR. The helical transmembrane segment at 555–575 threads the bilayer; it reads FLRIIPSMKLMAVVASTVLGL. At 576-580 the chain is on the cytoplasmic side; it reads VQNMR. The helical transmembrane segment at 581–601 threads the bilayer; sequence AFGGILVVVYYVFAIIGINLF. Residues 602-635 lie on the Extracellular side of the membrane; the sequence is RGVIVALPGNSSLAPANGSAPCGSFEQLEYWANN. Residues Asn611 and Asn618 are each glycosylated (N-linked (GlcNAc...) asparagine). An intramembrane region (helical; Pore-forming) is located at residues 636–658; sequence FDDFAAALVTLWNLMVVNNWQVF. Residues 659–673 are Extracellular-facing; the sequence is LDAYRRYSGPWSKIY. A helical membrane pass occupies residues 674–694; sequence FVLWWLVSSVIWVNLFLALIL. Residues 695–752 lie on the Cytoplasmic side of the membrane; it reads ENFLHKWDPRSHLQPLAGTPEATYQMTVELLFRDILEEPGEDELTERLSQHPHLWLCR.

Belongs to the calcium channel alpha-1 subunit (TC 1.A.1.11) family. Two pore calcium channel subfamily. As to quaternary structure, homodimer. Interacts with LRRK2. Interacts with HAX1. Interacts with MTOR; the interaction is required for TPCN2 ATP sensitivity. Found in a complex with LSM12, TPCN1 and TPCN2. Interacts with LSM12. N-glycosylated. Widely expressed. Expressed at high level in liver and kidney.

The protein localises to the late endosome membrane. It is found in the lysosome membrane. It localises to the melanosome membrane. The enzyme catalyses Na(+)(in) = Na(+)(out). It catalyses the reaction Ca(2+)(in) = Ca(2+)(out). With respect to regulation, regulated by Mg(2+) ions, cytosolic Mg(2+) selectively inhibits outward current while lysosomal Mg(2+) modestly inhibits both the outward and inward currents. In the absence of Mg(2+), NAADP readily activates TPCN2, with properties similar to PI(3,5)P2. Na(+) current is inhibited by ATP in a MTORC-dependent manner. ATP sensitivity is independent of PI(3,5)P2. Both current elicited by PI(3,5)P2 as well as NAADP are inhibited by tetrandrine. Functionally, intracellular channel initially characterized as a non-selective Ca(2+)-permeable channel activated by NAADP (nicotinic acid adenine dinucleotide phosphate), it is also a highly-selective Na(+) channel activated directly by PI(3,5)P2 (phosphatidylinositol 3,5-bisphosphate). Localizes to the lysosomal and late endosome membranes where it regulates organellar membrane excitability, membrane trafficking, and pH homeostasis. Is associated with a plethora of physiological processes, including mTOR-dependent nutrient sensing, skin pigmentation and autophagy. Ion selectivity is not fixed but rather agonist-dependent and under defined ionic conditions, can be readily activated by both NAADP and PI(3,5)P2. As calcium channel, it increases the pH in the lysosomal lumen, as sodium channel, it promotes lysosomal exocytosis. Plays a crucial role in endolysosomal trafficking in the endolysosomal degradation pathway and is potentially involved in the homeostatic control of many macromolecules and cell metabolites. Also expressed in melanosomes of pigmented cells where mediates a Ca(2+) channel and/or PI(3,5)P2-activated melanosomal Na(+) channel to acidify pH and inhibit tyrosinase activity required for melanogenesis and pigmentation. Unlike the voltage-dependent TPCN1, TPCN2 is voltage independent and can be activated solely by PI(3,5)P2 binding. In contrast, PI(4,5)P2, PI(3,4)P2, PI(3)P and PI(5)P have no obvious effect on channel activation. Its function is as follows. (Microbial infection) During Ebola virus (EBOV) infection, controls the movement of endosomes containing virus particles and is required by EBOV to escape from the endosomal network into the cell cytoplasm. (Microbial infection) Required for cell entry of coronaviruses SARS-CoV and SARS-CoV-2, as well as human coronavirus EMC (HCoV-EMC), by endocytosis. The polypeptide is Two pore channel protein 2 (Homo sapiens (Human)).